Consider the following 375-residue polypeptide: F-box/kelch-repeat protein At4g39580 (375 aa).

An F-box domain is found at 20-66 (PTTNLFLPDDILLSSLSRISRLYYPTFSLVSKSFRSLIASPELYQTR). Kelch repeat units follow at residues 132–178 (NIYA…VLDG), 179–225 (KIYV…KSVG), and 229–269 (KYHL…VINN).

The polypeptide is F-box/kelch-repeat protein At4g39580 (Arabidopsis thaliana (Mouse-ear cress)).